Consider the following 254-residue polypeptide: Triosephosphate isomerase (254 aa).

Position 9–11 (9–11) interacts with substrate; sequence NWK. The active-site Electrophile is H96. E169 acts as the Proton acceptor in catalysis. Substrate-binding positions include G175, S215, and 236–237; that span reads GG.

This sequence belongs to the triosephosphate isomerase family. In terms of assembly, homodimer.

It is found in the cytoplasm. The catalysed reaction is D-glyceraldehyde 3-phosphate = dihydroxyacetone phosphate. It functions in the pathway carbohydrate biosynthesis; gluconeogenesis. Its pathway is carbohydrate degradation; glycolysis; D-glyceraldehyde 3-phosphate from glycerone phosphate: step 1/1. Its function is as follows. Involved in the gluconeogenesis. Catalyzes stereospecifically the conversion of dihydroxyacetone phosphate (DHAP) to D-glyceraldehyde-3-phosphate (G3P). The chain is Triosephosphate isomerase from Borrelia recurrentis (strain A1).